Reading from the N-terminus, the 221-residue chain is Urease accessory protein UreE (221 aa).

Positions 171–180 (HHGHDHDHGH) are enriched in basic and acidic residues. Residues 171-221 (HHGHDHDHGHSHSHSHSHSHSHSHSHDHDHDHDHEHDVKGHVHGPGCGHKH) are disordered. Residues 181–193 (SHSHSHSHSHSHS) are compositionally biased toward basic residues. The segment covering 194–210 (HSHDHDHDHDHEHDVKG) has biased composition (basic and acidic residues).

This sequence belongs to the UreE family.

It is found in the cytoplasm. Functionally, involved in urease metallocenter assembly. Binds nickel. Probably functions as a nickel donor during metallocenter assembly. This chain is Urease accessory protein UreE, found in Cupriavidus pinatubonensis (strain JMP 134 / LMG 1197) (Cupriavidus necator (strain JMP 134)).